A 292-amino-acid polypeptide reads, in one-letter code: 33 kDa chaperonin (292 aa).

2 disulfides stabilise this stretch: cysteine 230–cysteine 232 and cysteine 263–cysteine 266.

This sequence belongs to the HSP33 family. Under oxidizing conditions two disulfide bonds are formed involving the reactive cysteines. Under reducing conditions zinc is bound to the reactive cysteines and the protein is inactive.

The protein resides in the cytoplasm. Redox regulated molecular chaperone. Protects both thermally unfolding and oxidatively damaged proteins from irreversible aggregation. Plays an important role in the bacterial defense system toward oxidative stress. The sequence is that of 33 kDa chaperonin from Salmonella typhimurium (strain LT2 / SGSC1412 / ATCC 700720).